The sequence spans 117 residues: Large ribosomal subunit protein bL20 (117 aa).

Belongs to the bacterial ribosomal protein bL20 family.

Binds directly to 23S ribosomal RNA and is necessary for the in vitro assembly process of the 50S ribosomal subunit. It is not involved in the protein synthesizing functions of that subunit. The chain is Large ribosomal subunit protein bL20 from Finegoldia magna (strain ATCC 29328 / DSM 20472 / WAL 2508) (Peptostreptococcus magnus).